Here is a 146-residue protein sequence, read N- to C-terminus: Ecotin-like protein 1 (146 aa).

It belongs to the protease inhibitor I11 (ecotin) family.

The sequence is that of Ecotin-like protein 1 (ISP1) from Leishmania major.